A 317-amino-acid polypeptide reads, in one-letter code: Ribosomal RNA small subunit methyltransferase H (317 aa).

Residues 39–41 (GGH), Asp-59, Phe-83, Asp-104, and Gln-111 contribute to the S-adenosyl-L-methionine site.

The protein belongs to the methyltransferase superfamily. RsmH family.

It is found in the cytoplasm. The catalysed reaction is cytidine(1402) in 16S rRNA + S-adenosyl-L-methionine = N(4)-methylcytidine(1402) in 16S rRNA + S-adenosyl-L-homocysteine + H(+). Its function is as follows. Specifically methylates the N4 position of cytidine in position 1402 (C1402) of 16S rRNA. This chain is Ribosomal RNA small subunit methyltransferase H, found in Paraburkholderia xenovorans (strain LB400).